Reading from the N-terminus, the 122-residue chain is Large ribosomal subunit protein bL12 (122 aa).

This sequence belongs to the bacterial ribosomal protein bL12 family. Homodimer. Part of the ribosomal stalk of the 50S ribosomal subunit. Forms a multimeric L10(L12)X complex, where L10 forms an elongated spine to which 2 to 4 L12 dimers bind in a sequential fashion. Binds GTP-bound translation factors.

Its function is as follows. Forms part of the ribosomal stalk which helps the ribosome interact with GTP-bound translation factors. Is thus essential for accurate translation. The chain is Large ribosomal subunit protein bL12 from Pseudomonas aeruginosa (strain LESB58).